The primary structure comprises 2512 residues: Isonitrile lipopeptide synthase (2512 aa).

Carrier domains follow at residues 935–1003 (AAGL…PTPD) and 1984–2059 (APAG…GRDA). O-(pantetheine 4'-phosphoryl)serine is present on residues Ser963 and Ser2019. The 261-residue stretch at 2112 to 2372 (LTGATGFLGR…LPVTFVAEAI (261 aa)) folds into the Thioester reductase (TE) domain.

The protein belongs to the ATP-dependent AMP-binding enzyme family. Pantetheine 4'-phosphate is required as a cofactor.

It carries out the reaction 2 a (3R)-3-isocyanyl-fatty acyl-[ACP] + L-lysine + ATP + 2 NADPH = an isonitrile lipopeptide + 2 holo-[ACP] + AMP + diphosphate + 2 NADP(+). Functionally, nonribosomal peptide synthetase (NRPS) involved in the biosynthesis of a unique class of isonitrile lipopeptides (INLPs) that seem to function as virulence factors in M.tuberculosis and to play a role in metal acquisition. Catalyzes the final step in the pathway, i.e. the condensation of a (3R)-3-isocyanyl-fatty acyl-[ACP] to both amino groups of a lysine, producing isonitrile lipopeptides. The polypeptide is Isonitrile lipopeptide synthase (Mycobacterium tuberculosis (strain ATCC 25618 / H37Rv)).